Reading from the N-terminus, the 1212-residue chain is Nucleolar protein 6 (1212 aa).

2 disordered regions span residues 1–72 (MGKI…PVSI) and 1156–1212 (KREQ…KSLS). The span at 1197–1212 (LKRKSLIKSRPLKSLS) shows a compositional bias: basic residues.

This sequence belongs to the NRAP family. As to quaternary structure, part of the small subunit (SSU) processome, composed of more than 70 proteins and the RNA chaperone small nucleolar RNA (snoRNA) U3.

It localises to the nucleus. The protein resides in the nucleolus. Its subcellular location is the chromosome. In terms of biological role, part of the small subunit (SSU) processome, first precursor of the small eukaryotic ribosomal subunit. During the assembly of the SSU processome in the nucleolus, many ribosome biogenesis factors, an RNA chaperone and ribosomal proteins associate with the nascent pre-rRNA and work in concert to generate RNA folding, modifications, rearrangements and cleavage as well as targeted degradation of pre-ribosomal RNA by the RNA exosome. The protein is Nucleolar protein 6 of Drosophila persimilis (Fruit fly).